The chain runs to 433 residues: Enolase (433 aa).

Position 164 (Gln-164) interacts with (2R)-2-phosphoglycerate. Glu-206 serves as the catalytic Proton donor. Asp-243, Glu-289, and Asp-316 together coordinate Mg(2+). Residues Lys-341, Arg-370, Ser-371, and Lys-392 each contribute to the (2R)-2-phosphoglycerate site. Residue Lys-341 is the Proton acceptor of the active site.

The protein belongs to the enolase family. The cofactor is Mg(2+).

The protein resides in the cytoplasm. It localises to the secreted. It is found in the cell surface. It catalyses the reaction (2R)-2-phosphoglycerate = phosphoenolpyruvate + H2O. It participates in carbohydrate degradation; glycolysis; pyruvate from D-glyceraldehyde 3-phosphate: step 4/5. Catalyzes the reversible conversion of 2-phosphoglycerate (2-PG) into phosphoenolpyruvate (PEP). It is essential for the degradation of carbohydrates via glycolysis. In Borreliella burgdorferi (strain ZS7) (Borrelia burgdorferi), this protein is Enolase.